We begin with the raw amino-acid sequence, 258 residues long: ATP synthase subunit a (258 aa).

Helical transmembrane passes span 30-50 (SSYFMVLTTVLTIVLFMVAMS), 85-105 (FFPFVFTLFIFILVANMLGMF), 122-142 (LIVTVALAMLVWLTVIIYGVF), 151-171 (LFVPSGVPIFVLPLVVVIEII), 198-218 (FAGFVVTLAAAWGGFGYLAGI), and 230-250 (LEFLVAFLQAYVFAMLTCIYL).

Belongs to the ATPase A chain family. In terms of assembly, F-type ATPases have 2 components, CF(1) - the catalytic core - and CF(0) - the membrane proton channel. CF(1) has five subunits: alpha(3), beta(3), gamma(1), delta(1), epsilon(1). CF(0) has three main subunits: a(1), b(2) and c(9-12). The alpha and beta chains form an alternating ring which encloses part of the gamma chain. CF(1) is attached to CF(0) by a central stalk formed by the gamma and epsilon chains, while a peripheral stalk is formed by the delta and b chains.

The protein localises to the cell inner membrane. Functionally, key component of the proton channel; it plays a direct role in the translocation of protons across the membrane. In Maricaulis maris (strain MCS10) (Caulobacter maris), this protein is ATP synthase subunit a.